A 270-amino-acid chain; its full sequence is Glucosamine-6-phosphate deaminase (270 aa).

Catalysis depends on Asp68, which acts as the Proton acceptor; for enolization step. The active-site For ring-opening step is Asp145. His147 serves as the catalytic Proton acceptor; for ring-opening step. Glu152 serves as the catalytic For ring-opening step.

The protein belongs to the glucosamine/galactosamine-6-phosphate isomerase family. NagB subfamily.

The enzyme catalyses alpha-D-glucosamine 6-phosphate + H2O = beta-D-fructose 6-phosphate + NH4(+). It participates in amino-sugar metabolism; N-acetylneuraminate degradation; D-fructose 6-phosphate from N-acetylneuraminate: step 5/5. Its function is as follows. Catalyzes the reversible isomerization-deamination of glucosamine 6-phosphate (GlcN6P) to form fructose 6-phosphate (Fru6P) and ammonium ion. The sequence is that of Glucosamine-6-phosphate deaminase from Bifidobacterium longum subsp. infantis (strain ATCC 15697 / DSM 20088 / JCM 1222 / NCTC 11817 / S12).